Here is a 267-residue protein sequence, read N- to C-terminus: NAD kinase (267 aa).

D45 acts as the Proton acceptor in catalysis. Residues 45–46, 121–122, R147, D149, 160–165, and A184 each bind NAD(+); these read DG, NE, and TAYSKS.

This sequence belongs to the NAD kinase family. A divalent metal cation is required as a cofactor.

It localises to the cytoplasm. It catalyses the reaction NAD(+) + ATP = ADP + NADP(+) + H(+). Functionally, involved in the regulation of the intracellular balance of NAD and NADP, and is a key enzyme in the biosynthesis of NADP. Catalyzes specifically the phosphorylation on 2'-hydroxyl of the adenosine moiety of NAD to yield NADP. This is NAD kinase from Lactobacillus acidophilus (strain ATCC 700396 / NCK56 / N2 / NCFM).